We begin with the raw amino-acid sequence, 160 residues long: Cytochrome b6-f complex subunit 4 (160 aa).

3 helical membrane-spanning segments follow: residues 36 to 56, 95 to 115, and 131 to 151; these read LLYIFPVVILGTIACNVGLAV, LLGVLLMVSVPTGLLTVPFLE, and TVFLFGTALSLWLGIGATLPI.

It belongs to the cytochrome b family. PetD subfamily. As to quaternary structure, the 4 large subunits of the cytochrome b6-f complex are cytochrome b6, subunit IV (17 kDa polypeptide, petD), cytochrome f and the Rieske protein, while the 4 small subunits are petG, petL, petM and petN. The complex functions as a dimer.

It is found in the plastid. Its subcellular location is the chloroplast thylakoid membrane. Its function is as follows. Component of the cytochrome b6-f complex, which mediates electron transfer between photosystem II (PSII) and photosystem I (PSI), cyclic electron flow around PSI, and state transitions. The polypeptide is Cytochrome b6-f complex subunit 4 (Amborella trichopoda).